A 984-amino-acid chain; its full sequence is DNA polymerase (984 aa).

The interval 804–827 (DNPGKKRKSTDDNEGPSPKRRVIT) is bipartite nuclear localization signal. The monopartite nuclear localization signal stretch occupies residues 939 to 948 (CSVKRKRDDD). The interval 943–969 (RKRDDDDDNDDDDDDDCDSSDSENDTQ) is disordered. The span at 947–966 (DDDDNDDDDDDDCDSSDSEN) shows a compositional bias: acidic residues.

It belongs to the DNA polymerase type-B family.

Its subcellular location is the host nucleus. The catalysed reaction is DNA(n) + a 2'-deoxyribonucleoside 5'-triphosphate = DNA(n+1) + diphosphate. Its function is as follows. Replicates the viral genome, host DNA polymerases cannot substitute for the viral enzyme in this process. The sequence is that of DNA polymerase (POL) from Autographa californica nuclear polyhedrosis virus (AcMNPV).